A 77-amino-acid polypeptide reads, in one-letter code: Acyl carrier protein (77 aa).

Residues 1-76 enclose the Carrier domain; that stretch reads MAIFDDVKKV…DVVNYIENLQ (76 aa). S36 is subject to O-(pantetheine 4'-phosphoryl)serine.

The protein belongs to the acyl carrier protein (ACP) family. 4'-phosphopantetheine is transferred from CoA to a specific serine of apo-ACP by AcpS. This modification is essential for activity because fatty acids are bound in thioester linkage to the sulfhydryl of the prosthetic group.

The protein localises to the cytoplasm. It functions in the pathway lipid metabolism; fatty acid biosynthesis. Carrier of the growing fatty acid chain in fatty acid biosynthesis. This chain is Acyl carrier protein, found in Campylobacter lari (strain RM2100 / D67 / ATCC BAA-1060).